A 196-amino-acid polypeptide reads, in one-letter code: 7-methyl-GTP pyrophosphatase (196 aa).

Residue D72 is the Proton acceptor of the active site.

The protein belongs to the Maf family. YceF subfamily. It depends on a divalent metal cation as a cofactor.

The protein localises to the cytoplasm. The catalysed reaction is N(7)-methyl-GTP + H2O = N(7)-methyl-GMP + diphosphate + H(+). Its function is as follows. Nucleoside triphosphate pyrophosphatase that hydrolyzes 7-methyl-GTP (m(7)GTP). May have a dual role in cell division arrest and in preventing the incorporation of modified nucleotides into cellular nucleic acids. The chain is 7-methyl-GTP pyrophosphatase from Neisseria meningitidis serogroup B (strain ATCC BAA-335 / MC58).